The chain runs to 423 residues: Citrate synthase-like protein clz17 (423 aa).

Residues His357 and Asp413 contribute to the active site.

Belongs to the citrate synthase family.

The protein operates within secondary metabolite biosynthesis. Citrate synthase-like protein; part of the gene cluster that mediates the biosynthesis of squalestatin S1 (SQS1, also known as zaragozic acid A), a heavily oxidized fungal polyketide that offers potent cholesterol lowering activity by targeting squalene synthase (SS). SQS1 is composed of a 2,8-dioxobicyclic[3.2.1]octane-3,4,5-tricarboxyclic acid core that is connected to two lipophilic polyketide arms. These initial steps feature the priming of an unusual benzoic acid starter unit onto the highly reducing polyketide synthase clz14, followed by oxaloacetate extension and product release to generate a tricarboxylic acid containing product. The phenylalanine ammonia lyase (PAL) clz10 and the acyl-CoA ligase clz12 are involved in transforming phenylalanine into benzoyl-CoA. The citrate synthase-like protein clz17 is involved in connecting the C-alpha-carbons of the hexaketide chain and oxaloacetate to afford the tricarboxylic acid unit. The potential hydrolytic enzymes, clz11 and clz13, are in close proximity to pks2 and may participate in product release. On the other side, the tetraketide arm is synthesized by a the squalestatin tetraketide synthase clz2 and enzymatically esterified to the core in the last biosynthetic step, by the acetyltransferase clz6. The biosynthesis of the tetraketide must involve 3 rounds of chain extension. After the first and second rounds methyl-transfer occurs, and in all rounds of extension the ketoreductase and dehydratase are active. The enoyl reductase and C-MeT of clz2 are not active in the final round of extension. The acetyltransferase clz6 appears to have a broad substrate selectivity for its acyl CoA substrate, allowing the in vitro synthesis of novel squalestatins. The biosynthesis of SQS1 requires several oxidative steps likely performed by oxidoreductases clz3, clz15 and clz16. Finally, in support of the identification of the cluster as being responsible for SQS1 production, the cluster contains a gene encoding a putative squalene synthase (SS) clz20, suggesting a likely mechanism for self-resistance. The sequence is that of Citrate synthase-like protein clz17 from Cochliobolus lunatus (Filamentous fungus).